Reading from the N-terminus, the 24-residue chain is Defensin D6 (24 aa).

It belongs to the DEFL family. Group IV subfamily. In terms of tissue distribution, distributed in the epidermal cell layer of leaves and in the subepidermal layer region of stems. Not in roots.

The protein localises to the secreted. Its subcellular location is the cell wall. Antimicrobial peptide. Active against Fusarium spp., Gram-positive and Gram-negative bacterial pathogens. In Spinacia oleracea (Spinach), this protein is Defensin D6.